We begin with the raw amino-acid sequence, 474 residues long: Siroheme synthase (474 aa).

Residues 1–203 form a precorrin-2 dehydrogenase /sirohydrochlorin ferrochelatase region; that stretch reads MDYLPIFLKL…GRAEDAERVL (203 aa). NAD(+) contacts are provided by residues 22-23 and 43-44; these read EV and AS. The uroporphyrinogen-III C-methyltransferase stretch occupies residues 219-474; that stretch reads GSVALVGAGP…QETEGRSGNG (256 aa). S-adenosyl-L-methionine is bound at residue P228. D251 serves as the catalytic Proton acceptor. The active-site Proton donor is the K273. S-adenosyl-L-methionine contacts are provided by residues 304 to 306, I309, 334 to 335, M387, and G416; these read GGD and TA.

In the N-terminal section; belongs to the precorrin-2 dehydrogenase / sirohydrochlorin ferrochelatase family. It in the C-terminal section; belongs to the precorrin methyltransferase family.

It catalyses the reaction uroporphyrinogen III + 2 S-adenosyl-L-methionine = precorrin-2 + 2 S-adenosyl-L-homocysteine + H(+). It carries out the reaction precorrin-2 + NAD(+) = sirohydrochlorin + NADH + 2 H(+). The enzyme catalyses siroheme + 2 H(+) = sirohydrochlorin + Fe(2+). The protein operates within cofactor biosynthesis; adenosylcobalamin biosynthesis; precorrin-2 from uroporphyrinogen III: step 1/1. It participates in cofactor biosynthesis; adenosylcobalamin biosynthesis; sirohydrochlorin from precorrin-2: step 1/1. Its pathway is porphyrin-containing compound metabolism; siroheme biosynthesis; precorrin-2 from uroporphyrinogen III: step 1/1. It functions in the pathway porphyrin-containing compound metabolism; siroheme biosynthesis; siroheme from sirohydrochlorin: step 1/1. The protein operates within porphyrin-containing compound metabolism; siroheme biosynthesis; sirohydrochlorin from precorrin-2: step 1/1. In terms of biological role, multifunctional enzyme that catalyzes the SAM-dependent methylations of uroporphyrinogen III at position C-2 and C-7 to form precorrin-2 via precorrin-1. Then it catalyzes the NAD-dependent ring dehydrogenation of precorrin-2 to yield sirohydrochlorin. Finally, it catalyzes the ferrochelation of sirohydrochlorin to yield siroheme. The polypeptide is Siroheme synthase (Methylococcus capsulatus (strain ATCC 33009 / NCIMB 11132 / Bath)).